The primary structure comprises 169 residues: Large ribosomal subunit protein bL19m (169 aa).

Residues 1–16 (MWSRNVRLLGSWTRSY) constitute a mitochondrion transit peptide.

It belongs to the bacterial ribosomal protein bL19 family. As to quaternary structure, component of the mitochondrial large ribosomal subunit (mt-LSU). Mature yeast 74S mitochondrial ribosomes consist of a small (37S) and a large (54S) subunit. The 37S small subunit contains a 15S ribosomal RNA (15S mt-rRNA) and 34 different proteins. The 54S large subunit contains a 21S rRNA (21S mt-rRNA) and 46 different proteins.

The protein localises to the mitochondrion. In terms of biological role, component of the mitochondrial ribosome (mitoribosome), a dedicated translation machinery responsible for the synthesis of mitochondrial genome-encoded proteins, including at least some of the essential transmembrane subunits of the mitochondrial respiratory chain. The mitoribosomes are attached to the mitochondrial inner membrane and translation products are cotranslationally integrated into the membrane. bL19m is essential for respiration. The polypeptide is Large ribosomal subunit protein bL19m (IMG1) (Saccharomyces cerevisiae (strain ATCC 204508 / S288c) (Baker's yeast)).